Consider the following 1992-residue polypeptide: E3 ubiquitin-protein ligase TRIP12 (1992 aa).

The span at Met1–Gly10 shows a compositional bias: polar residues. The interval Met1–Glu398 is disordered. Ser2 carries the post-translational modification N-acetylserine. Residue Ser12 is modified to Phosphoserine. The segment covering Arg18–Asp27 has biased composition (polar residues). Over residues Ser29–Val43 the composition is skewed to low complexity. A compositionally biased stretch (basic and acidic residues) spans Asp48–Arg70. Residues Ser77, Ser85, and Ser100 each carry the phosphoserine modification. Residues Pro78–Ser88 show a composition bias toward polar residues. The span at Ser154 to Glu164 shows a compositional bias: polar residues. Composition is skewed to low complexity over residues Pro175–Ala188 and Ser196–Ala215. N6-acetyllysine is present on Lys181. The span at Pro280–Pro290 shows a compositional bias: polar residues. 2 positions are modified to phosphoserine: Ser310 and Ser312. Residues Gly330 to Gly339 show a composition bias toward low complexity. Residues Gly346–Asp358 are compositionally biased toward basic and acidic residues. Polar residues predominate over residues Asn362 to Ala371. Residues Met749–Lys836 form the WWE domain. The interval Ser938–Ser1044 is disordered. Ser942 bears the Phosphoserine mark. Residues Thr948–Val960 show a composition bias toward polar residues. Residues Asn961 to Ala973 show a composition bias toward low complexity. A phosphoserine mark is found at Ser991 and Ser997. Residues Lys1001–Lys1014 are compositionally biased toward basic residues. Phosphoserine is present on Ser1016. Residues Pro1017–Asn1026 show a composition bias toward basic and acidic residues. Low complexity predominate over residues Lys1029–Ser1040. Phosphoserine is present on residues Ser1030, Ser1317, Ser1322, Ser1329, and Ser1376. A Phosphothreonine modification is found at Thr1377. Disordered stretches follow at residues Ser1407–His1434 and Thr1568–Asp1587. Lys1425 carries the N6-acetyllysine modification. Ser1427 carries the phosphoserine modification. Positions Glu1496–Pro1570 are K-box. In terms of domain architecture, HECT spans Pro1885 to Ser1992. The active-site Glycyl thioester intermediate is Cys1959.

This sequence belongs to the UPL family. K-HECT subfamily. Interacts with MYC; leading to disrupt interaction with isoform p19ARF/ARF of CDKN2A. Interacts with TRADD; leading to disrupt interaction with isoform p19ARF/ARF of CDKN2A. Interacts with SMARCC1; leading to disrupt interaction with SMARCE1.

It localises to the nucleus. The protein localises to the nucleoplasm. It carries out the reaction S-ubiquitinyl-[E2 ubiquitin-conjugating enzyme]-L-cysteine + [acceptor protein]-L-lysine = [E2 ubiquitin-conjugating enzyme]-L-cysteine + N(6)-ubiquitinyl-[acceptor protein]-L-lysine.. It participates in protein modification; protein ubiquitination. Functionally, E3 ubiquitin-protein ligase involved in ubiquitin fusion degradation (UFD) pathway and regulation of DNA repair. Part of the ubiquitin fusion degradation (UFD) pathway, a process that mediates ubiquitination of protein at their N-terminus, regardless of the presence of lysine residues in target proteins. Acts as a key regulator of DNA damage response by acting as a suppressor of RNF168, an E3 ubiquitin-protein ligase that promotes accumulation of 'Lys-63'-linked histone H2A and H2AX at DNA damage sites, thereby acting as a guard against excessive spreading of ubiquitinated chromatin at damaged chromosomes. In normal cells, mediates ubiquitination and degradation of isoform p19ARF/ARF of CDKN2A, a lysine-less tumor suppressor required for p53/TP53 activation under oncogenic stress. In cancer cells, however, isoform p19ARF/ARF and TRIP12 are located in different cell compartments, preventing isoform p19ARF/ARF ubiquitination and degradation. Does not mediate ubiquitination of isoform p16-INK4a of CDKN2A. Also catalyzes ubiquitination of NAE1 and SMARCE1, leading to their degradation. Ubiquitination and degradation of target proteins is regulated by interaction with proteins such as MYC, TRADD or SMARCC1, which disrupt the interaction between TRIP12 and target proteins. Mediates ubiquitination of ASXL1: following binding to N(6)-methyladenosine methylated DNA, ASXL1 is ubiquitinated by TRIP12, leading to its degradation and subsequent inactivation of the PR-DUB complex. This Bos taurus (Bovine) protein is E3 ubiquitin-protein ligase TRIP12 (TRIP12).